The sequence spans 927 residues: MAGAGGWDPLVGSEIHGFLTYPDLNYEKLVAEAAARWFRPNEIYAILANHARFKIHAQPVDKPVSGTVVLYDRKVVRNFRKDGHNWKKKKDGRTVQEAHEKLKIGNEERVHVYYARGEDDPNFFRRCYWLLDKDLERIVLVHYRQTAEENAMAPPNPEPEVADVPTVNLIHYTSPLTSADSTSGHTELSLPEEINSHGGISASSETGNHDSSLEEFWANLLESSIKNDPKVVTSACGGSFVSSQQINNGPKNSGNIVNTSMASNAIPALNVVSETYATNHGLNQVNANHFGALKHQGDQTQSLLASDVDSQSDQFISSSVKSPMDGNTSIPNEVPARQNSLGLWKYLDDDSPGLGDNPSSVPQSFCPVTNERLLEINEISPEWAYSTETTKVVVIGNFYEQYKHLAGSAMFGVFGEQCVAGDIVQTGVYRFMVGPHTPGKVDFYLTLDGKTPISEICSFTYHVMHGSSLEARLPPSEDDYKRTNLKMQMRLARLLFATNKKKIAPKLLVEGTKVANLMSALPEKEWMDLWNILSDPEGTYVPVTESLLELVLRNRLQEWLVEMVMEGHKSTGRDDLGQGAIHLCSFLGYTWAIRLFSLSGFSLDFRDSSGWTALHWAAYHGRERMVATLLSAGANPSLVTDPTPESPAGLTAADLAARQGYDGLAAYLAEKGLTAHFEAMSLSKDTEQSPSKTRLTKLQSEKFEHLSEQELCLKESLAAYRNAADAASNIQAALRERTLKLQTKAIQLANPEIEASEIVAAMKIQHAFRNYNRKKAMRAAARIQSHFRTWKMRRNFINMRRQVIRIQAAYRGHQVRRQYRKVIWSVGIVEKAILRWRKKRKGLRGIASGMPVVMTVDAEAEPASTAEEDFFQAGRQQAEDRFNRSVVRVQALFRSYKAQQEYRRMKIAHEEAKIEFSEGQLGAACRS.

The CG-1 DNA-binding region spans 26-152; that stretch reads YEKLVAEAAA…YRQTAEENAM (127 aa). Residues 70–96 are necessary and sufficient for nuclear localization; it reads LYDRKVVRNFRKDGHNWKKKKDGRTVQ. The short motif at 72 to 79 is the Nuclear localization signal element; that stretch reads DRKVVRNF. The stretch at 609–638 is one ANK repeat; that stretch reads SGWTALHWAAYHGRERMVATLLSAGANPSL. 2 IQ domains span residues 757-786 and 799-828; these read EIVA…IQSH and MRRQ…SVGI. The calmodulin-binding stretch occupies residues 826 to 845; that stretch reads VGIVEKAILRWRKKRKGLRG. Positions 830–851 are necessary and sufficient for nuclear localization; sequence EKAILRWRKKRKGLRGIASGMP. The IQ 3 domain maps to 882–911; the sequence is FNRSVVRVQALFRSYKAQQEYRRMKIAHEE.

The protein belongs to the CAMTA family.

It is found in the nucleus. With respect to regulation, transcriptional activation activity is strongly reduced by calmodulin. Functionally, transcription activator that binds calmodulin in a calcium-dependent manner in vitro. Binds to the DNA consensus sequence 5'-T[AC]CG[CT]GT[GT][GT][GT][GT]T[GT]CG-3'. The sequence is that of Calmodulin-binding transcription activator CBT from Oryza sativa subsp. japonica (Rice).